Here is a 203-residue protein sequence, read N- to C-terminus: Signal peptidase I (203 aa).

Residues Met-1–Ser-26 form a disordered region. The Cytoplasmic segment spans residues Met-1–Lys-33. Low complexity predominate over residues Pro-17–Ser-26. Residues Thr-34 to Ala-50 form a helical membrane-spanning segment. The Extracellular portion of the chain corresponds to Glu-51 to Tyr-203. Active-site residues include Ser-59 and Lys-109.

The protein belongs to the peptidase S26 family.

Its subcellular location is the cell membrane. It catalyses the reaction Cleavage of hydrophobic, N-terminal signal or leader sequences from secreted and periplasmic proteins.. The protein is Signal peptidase I (lepB) of Leptolyngbya laminosa (Phormidium laminosum).